The sequence spans 250 residues: Cruxrhodopsin-1 (250 aa).

The Extracellular portion of the chain corresponds to 1–9 (MPEPGSEAI). A helical membrane pass occupies residues 10–27 (WLWLGTAGMFLGMLYFIA). The Cytoplasmic segment spans residues 28–41 (RGWGETDSRRQKFY). A helical transmembrane segment spans residues 42–60 (IATILITAIAFVNYLAMAL). The Extracellular segment spans residues 61 to 77 (GFGLTIVEFAGEEHPIY). The helical transmembrane segment at 78–94 (WARYSDWLFTTPLLLYD) threads the bilayer. The Cytoplasmic segment spans residues 95–105 (LGLLAGADRNT). A helical transmembrane segment spans residues 106 to 125 (ITSLVSLDVLMIGTGLVATL). Residues 126–138 (SPGSGVLSAGAER) lie on the Extracellular side of the membrane. The chain crosses the membrane as a helical span at residues 139-158 (LVWWGISTAFLLVLLYFLFS). The Cytoplasmic portion of the chain corresponds to 159–176 (SLSGRVADLPSDTRSTFK). A helical membrane pass occupies residues 177-195 (TLRNLVTVVWLVYPVWWLI). Topologically, residues 196–207 (GTEGIGLVGIGI) are extracellular. Residues 208–227 (ETAGFMVIDLTAKVGFGIIL) form a helical membrane-spanning segment. Lysine 220 bears the N6-(retinylidene)lysine mark. Over 228-250 (LRSHGVLDGAAETTGTGATPADD) the chain is Cytoplasmic.

This sequence belongs to the archaeal/bacterial/fungal opsin family. Homotrimer.

It is found in the cell membrane. In terms of biological role, light-driven proton pump. In Haloarcula argentinensis, this protein is Cruxrhodopsin-1 (cop1).